Consider the following 51-residue polypeptide: 2,3,4,5-tetrahydropyridine-2,6-dicarboxylate N-succinyltransferase (51 aa).

The protein belongs to the transferase hexapeptide repeat family. As to quaternary structure, homotrimer.

The protein localises to the cytoplasm. It catalyses the reaction (S)-2,3,4,5-tetrahydrodipicolinate + succinyl-CoA + H2O = (S)-2-succinylamino-6-oxoheptanedioate + CoA. It functions in the pathway amino-acid biosynthesis; L-lysine biosynthesis via DAP pathway; LL-2,6-diaminopimelate from (S)-tetrahydrodipicolinate (succinylase route): step 1/3. This Klebsiella oxytoca protein is 2,3,4,5-tetrahydropyridine-2,6-dicarboxylate N-succinyltransferase (dapD).